A 615-amino-acid chain; its full sequence is Probable methylmalonyl-CoA mutase small subunit (615 aa).

It belongs to the methylmalonyl-CoA mutase family. As to quaternary structure, heterodimer of an alpha and a beta chain. Adenosylcob(III)alamin serves as cofactor.

The catalysed reaction is (R)-methylmalonyl-CoA = succinyl-CoA. It participates in metabolic intermediate metabolism; propanoyl-CoA degradation; succinyl-CoA from propanoyl-CoA: step 3/3. Functionally, catalyzes the isomerization of succinyl-CoA to methylmalonyl-CoA during synthesis of propionate from tricarboxylic acid-cycle intermediates. The chain is Probable methylmalonyl-CoA mutase small subunit (mutA) from Mycobacterium bovis (strain ATCC BAA-935 / AF2122/97).